The following is a 363-amino-acid chain: Putative replication factor C small subunit L510 (363 aa).

Residue 47–54 (GPPGTGKT) participates in ATP binding.

The protein belongs to the activator 1 small subunits family. RfcS subfamily.

Functionally, part of the RFC clamp loader complex which loads the PCNA sliding clamp onto DNA. The sequence is that of Putative replication factor C small subunit L510 from Acanthamoeba polyphaga mimivirus (APMV).